The primary structure comprises 212 residues: Adenylate kinase (212 aa).

10–15 is a binding site for ATP; that stretch reads GAGKGT. An NMP region spans residues 30–59; the sequence is STGDMFRAAMVNQTEMGVLAKSYIDKGELV. AMP-binding positions include Thr31, Arg36, 57 to 59, 86 to 89, and Gln93; these read ELV and GYPR. Residues 127-159 form an LID region; that stretch reads GRIIHRVTGETFHKVFNPPVDYKEEDYYQREDD. ATP-binding positions include Arg128 and 137-138; that span reads TF. Residues Arg156 and Arg167 each coordinate AMP. ATP is bound at residue Gln195.

This sequence belongs to the adenylate kinase family. Monomer.

It is found in the cytoplasm. It catalyses the reaction AMP + ATP = 2 ADP. It participates in purine metabolism; AMP biosynthesis via salvage pathway; AMP from ADP: step 1/1. Functionally, catalyzes the reversible transfer of the terminal phosphate group between ATP and AMP. Plays an important role in cellular energy homeostasis and in adenine nucleotide metabolism. The protein is Adenylate kinase of Streptococcus pneumoniae (strain 70585).